A 430-amino-acid polypeptide reads, in one-letter code: Adenylosuccinate synthetase (430 aa).

GTP-binding positions include 12–18 (GDEGKGK) and 40–42 (GHT). Aspartate 13 serves as the catalytic Proton acceptor. The Mg(2+) site is built by aspartate 13 and glycine 40. IMP contacts are provided by residues 13 to 16 (DEGK), 38 to 41 (NAGH), threonine 128, arginine 142, glutamine 223, threonine 238, and arginine 302. The active-site Proton donor is histidine 41. 298 to 304 (VNTGRKR) contacts substrate. GTP contacts are provided by residues arginine 304, 330–332 (KLD), and 412–414 (GVG).

This sequence belongs to the adenylosuccinate synthetase family. As to quaternary structure, homodimer. It depends on Mg(2+) as a cofactor.

It localises to the cytoplasm. The catalysed reaction is IMP + L-aspartate + GTP = N(6)-(1,2-dicarboxyethyl)-AMP + GDP + phosphate + 2 H(+). The protein operates within purine metabolism; AMP biosynthesis via de novo pathway; AMP from IMP: step 1/2. Its function is as follows. Plays an important role in the de novo pathway of purine nucleotide biosynthesis. Catalyzes the first committed step in the biosynthesis of AMP from IMP. In Corynebacterium aurimucosum (strain ATCC 700975 / DSM 44827 / CIP 107346 / CN-1) (Corynebacterium nigricans), this protein is Adenylosuccinate synthetase.